A 667-amino-acid chain; its full sequence is KFALFSVLTLLSFHAVFSFTPLHTQHPLDPITKEEFLAVQTIVQNKYPISNNKLAFHYIGVDDPEKDLVLKYETSPTLISIPRKIFVVAIINSQTHEILIDLTIKSIVSDNIHNGYGFPVLSAAEQFLAIDLPLKYPPFIASVNKRGLNISEIVCSSFTMGWFGEEKNSRTVRVDCFMKESTVNIYVRPITGITIVADLDLMKIVEYHDRDTEAVPTAENTEYQVSKQSPPFGPKQHSLTSHQPQGPGFQINGTSVSWANWKFHIGFDVRAGIVISLASIYDLEKHKSRRVLYKGYISELFVPYQDPTEEFYFKTFFDSGEFGFGLSTVSLIPNRDCPPHAQFIDTYIHSADGTPIFLENAICVFEQYGNIMWRHTETGIPNESIEESRTEVDLAIRTVVTVGNYDNVLDWEFKTSGWMKPSIALSGILEIKGTNIKHKDEIKEEIHGKLVSANSIGIYHDHFYIYYLDFDIDGTQNSFEKTSLKTVRIVDGGSKRKSYWTTETQTAKTESDAKITIGLAPAELVVVNPNIKTAVGNEVGYRLIPAIPAHPLLTEDDYPQIRGAFTNYNVWVTPYNRTEKWAGGLYVDHSRGDDTLAVWTKKNREIVNKDIVMWHVVGIHHVPAQEDFPIMPLLSTSFELRPTNFFERNPVLKTLPPRDFTWPGCSN.

Residues 1–18 form the signal peptide; the sequence is KFALFSVLTLLSFHAVFS. A glycan (N-linked (GlcNAc...) asparagine) is linked at asparagine 149. Cysteine 155 and cysteine 176 are oxidised to a cystine. The disordered stretch occupies residues 216-246; sequence PTAENTEYQVSKQSPPFGPKQHSLTSHQPQG. Over residues 218–229 the composition is skewed to polar residues; it reads AENTEYQVSKQS. N-linked (GlcNAc...) asparagine glycosylation is present at asparagine 252. 316–327 provides a ligand contact to substrate; it reads FFDSGEFGFGLS. Aspartate 318 serves as the catalytic Proton acceptor. Cysteine 337 and cysteine 363 are disulfide-bonded. Asparagine 382 is a glycosylation site (N-linked (GlcNAc...) asparagine). 402-407 provides a ligand contact to substrate; that stretch reads VGNYDN. Residue tyrosine 405 is the Schiff-base intermediate with substrate; via topaquinone of the active site. At tyrosine 405 the chain carries 2',4',5'-topaquinone. Residues histidine 460 and histidine 462 each coordinate Cu cation. Residues aspartate 469, phenylalanine 470, and aspartate 471 each coordinate Mn(2+). N-linked (GlcNAc...) asparagine glycosylation occurs at asparagine 576. Aspartate 610 and isoleucine 611 together coordinate Mn(2+). Residue histidine 621 participates in Cu cation binding.

Belongs to the copper/topaquinone oxidase family. As to quaternary structure, homodimer. The cofactor is Cu cation. Requires Zn(2+) as cofactor. It depends on L-topaquinone as a cofactor. Mn(2+) is required as a cofactor. In terms of processing, glycosylated; contains two carbohydrate chains per monomer. Topaquinone (TPQ) is generated by copper-dependent autoxidation of a specific tyrosyl residue.

It carries out the reaction a primary methyl amine + O2 + H2O = an aldehyde + H2O2 + NH4(+). In Lens culinaris (Lentil), this protein is Primary amine oxidase.